The primary structure comprises 445 residues: tRNA modification GTPase MnmE (445 aa).

(6S)-5-formyl-5,6,7,8-tetrahydrofolate is bound by residues R20, E79, and K119. One can recognise a TrmE-type G domain in the interval 215–371 (GLKLAIVGPP…ILKNIENIAE (157 aa)). A K(+)-binding site is contributed by N225. GTP is bound by residues 225–230 (NTGKSS), 244–250 (SNIAGTT), and 269–272 (DTAG). S229 is a binding site for Mg(2+). 3 residues coordinate K(+): S244, I246, and T249. Position 250 (T250) interacts with Mg(2+). K445 serves as a coordination point for (6S)-5-formyl-5,6,7,8-tetrahydrofolate.

The protein belongs to the TRAFAC class TrmE-Era-EngA-EngB-Septin-like GTPase superfamily. TrmE GTPase family. As to quaternary structure, homodimer. Heterotetramer of two MnmE and two MnmG subunits. The cofactor is K(+).

Its subcellular location is the cytoplasm. Functionally, exhibits a very high intrinsic GTPase hydrolysis rate. Involved in the addition of a carboxymethylaminomethyl (cmnm) group at the wobble position (U34) of certain tRNAs, forming tRNA-cmnm(5)s(2)U34. The protein is tRNA modification GTPase MnmE of Rickettsia akari (strain Hartford).